We begin with the raw amino-acid sequence, 95 residues long: Aspartyl/glutamyl-tRNA(Asn/Gln) amidotransferase subunit C (95 aa).

Belongs to the GatC family. In terms of assembly, heterotrimer of A, B and C subunits.

The enzyme catalyses L-glutamyl-tRNA(Gln) + L-glutamine + ATP + H2O = L-glutaminyl-tRNA(Gln) + L-glutamate + ADP + phosphate + H(+). It carries out the reaction L-aspartyl-tRNA(Asn) + L-glutamine + ATP + H2O = L-asparaginyl-tRNA(Asn) + L-glutamate + ADP + phosphate + 2 H(+). In terms of biological role, allows the formation of correctly charged Asn-tRNA(Asn) or Gln-tRNA(Gln) through the transamidation of misacylated Asp-tRNA(Asn) or Glu-tRNA(Gln) in organisms which lack either or both of asparaginyl-tRNA or glutaminyl-tRNA synthetases. The reaction takes place in the presence of glutamine and ATP through an activated phospho-Asp-tRNA(Asn) or phospho-Glu-tRNA(Gln). This chain is Aspartyl/glutamyl-tRNA(Asn/Gln) amidotransferase subunit C, found in Dinoroseobacter shibae (strain DSM 16493 / NCIMB 14021 / DFL 12).